We begin with the raw amino-acid sequence, 877 residues long: Oligopeptide transporter 2 (877 aa).

The Cytoplasmic portion of the chain corresponds to 1 to 167 (MSETVKDKVI…DPTIPVETFR (167 aa)). A helical transmembrane segment spans residues 168 to 188 (AYFLAIIWSVIGSGFNEFFSH). Arg189 is a topological domain (extracellular). The chain crosses the membrane as a helical span at residues 190–210 (VVSISLNTPIIQMFLYICGKA). The Cytoplasmic portion of the chain corresponds to 211 to 240 (WAKTIPCWTITIRGRKYGINIDKPWTQKEQ). The helical transmembrane segment at 241–261 (MFSTLLYAICQGAFYTHYNIL) threads the bilayer. At 262–272 (TQKLFYHSAFS) the chain is on the extracellular side. Residues 273-293 (FGYQFLLSLSVQFIGFGFAGI) traverse the membrane as a helical segment. Topologically, residues 294–334 (LRKFVVYPARALWPTVMPTIAINKALLGKEKHESGMSRYKF) are cytoplasmic. Residues 335–355 (FFLTFFIMFIYNWFPTYIINI) form a helical membrane-spanning segment. The Extracellular portion of the chain corresponds to 356–374 (LNTFNWMTWIKPSNINLAN). Asn374 carries an N-linked (GlcNAc...) asparagine glycan. Residues 375-395 (ITGGVTGLGINPISSFDWNVI) form a helical membrane-spanning segment. Topologically, residues 396-404 (SFNSPLVYP) are cytoplasmic. A helical membrane pass occupies residues 405 to 425 (FWSYLTQYLGCILAALIVIAV). Residues 426–480 (YYSNYMSCQYLPIFTNSLYTNTGHSFKVTEVLDSDNKLDVKKYQSYSPPYYSAGN) lie on the Extracellular side of the membrane. Residues 481-501 (LVSYGAFICAYPLMITWSFIV) form a helical membrane-spanning segment. Over 502–553 (HSKLLFNAFKDWALNLWAMRKLKSWVTMFKSDYRALDDYDDPHSNAMKNYKE) the chain is Cytoplasmic. Residues 554–574 (VPDWWYFAILIGSLVVGIAVV) traverse the membrane as a helical segment. Over 575-582 (EHYPTNTP) the chain is Extracellular. The helical transmembrane segment at 583-603 (VWGLFVCLGFNFVFLIPTTIL) threads the bilayer. Topologically, residues 604–614 (QATTGYSFGLN) are cytoplasmic. Residues 615–635 (LLIEMVMGYALPGNPIAIMIL) traverse the membrane as a helical segment. The Extracellular portion of the chain corresponds to 636-671 (KAFGYNIDGQADNYVSNLKIAHYCKIPPMALFRGQC). A helical transmembrane segment spans residues 672–692 (VIVFIQIFVNLGVLNWQISNI). The Cytoplasmic portion of the chain corresponds to 693–730 (KDFCTPHQNAKFTCPDAVTYYNASVVWGAIGPKRIFNY). The helical transmembrane segment at 731-751 (IYPIFKWCWLIGACIGIFFGV) threads the bilayer. Topologically, residues 752–766 (WKRWGKFYPRYFDPM) are extracellular. Residues 767-789 (LFVGGMLNMSPPYNLMYYTSGMI) traverse the membrane as a helical segment. The Cytoplasmic portion of the chain corresponds to 790–811 (VSYISQYYMKRHHLNLWEKYNY). A helical membrane pass occupies residues 812–832 (VLSAGFSTGLVLSAIIIFFAV). Topologically, residues 833–877 (QYKDTAFNWWGNTVPYAGADGVGYPLKNITDTANGYFGYAPGHYP) are extracellular. Asn860 carries N-linked (GlcNAc...) asparagine glycosylation.

This sequence belongs to the oligopeptide OPT transporter family.

Its subcellular location is the membrane. In terms of biological role, transports tetra- and pentapeptides. Does not transport glutathione. In Saccharomyces cerevisiae (strain ATCC 204508 / S288c) (Baker's yeast), this protein is Oligopeptide transporter 2 (OPT2).